The following is a 199-amino-acid chain: V-type ATP synthase subunit E (199 aa).

This sequence belongs to the V-ATPase E subunit family.

Its function is as follows. Produces ATP from ADP in the presence of a proton gradient across the membrane. This Borreliella afzelii (strain PKo) (Borrelia afzelii) protein is V-type ATP synthase subunit E.